The following is a 189-amino-acid chain: GTP cyclohydrolase 1 (189 aa).

Zn(2+) contacts are provided by cysteine 78, histidine 81, and cysteine 150.

It belongs to the GTP cyclohydrolase I family. Toroid-shaped homodecamer, composed of two pentamers of five dimers.

The catalysed reaction is GTP + H2O = 7,8-dihydroneopterin 3'-triphosphate + formate + H(+). Its pathway is cofactor biosynthesis; 7,8-dihydroneopterin triphosphate biosynthesis; 7,8-dihydroneopterin triphosphate from GTP: step 1/1. The protein is GTP cyclohydrolase 1 of Listeria innocua serovar 6a (strain ATCC BAA-680 / CLIP 11262).